Reading from the N-terminus, the 228-residue chain is Lipoprotein-releasing system ATP-binding protein LolD (228 aa).

Positions 9–228 (LEAHDIQKNF…ELINGCLYRR (220 aa)) constitute an ABC transporter domain. An ATP-binding site is contributed by 44 to 51 (GRSGEGKS).

It belongs to the ABC transporter superfamily. Lipoprotein translocase (TC 3.A.1.125) family. In terms of assembly, the complex is composed of two ATP-binding proteins (LolD) and two transmembrane proteins (LolC and LolE).

The protein localises to the cell inner membrane. In terms of biological role, part of the ABC transporter complex LolCDE involved in the translocation of mature outer membrane-directed lipoproteins, from the inner membrane to the periplasmic chaperone, LolA. Responsible for the formation of the LolA-lipoprotein complex in an ATP-dependent manner. The polypeptide is Lipoprotein-releasing system ATP-binding protein LolD (Protochlamydia amoebophila (strain UWE25)).